The chain runs to 256 residues: Alcohol dehydrogenase (256 aa).

12 to 41 (FVAGLGGIGLDTTKELLKRDLKNLVILDRI) lines the NAD(+) pocket. Residue Ser140 participates in substrate binding. Tyr153 serves as the catalytic Proton acceptor.

This sequence belongs to the short-chain dehydrogenases/reductases (SDR) family. As to quaternary structure, homodimer.

It carries out the reaction a primary alcohol + NAD(+) = an aldehyde + NADH + H(+). The enzyme catalyses a secondary alcohol + NAD(+) = a ketone + NADH + H(+). In Drosophila ananassae (Fruit fly), this protein is Alcohol dehydrogenase.